The following is a 475-amino-acid chain: Probable proline--tRNA ligase, mitochondrial (475 aa).

The transit peptide at 1-29 (MEGLLTRCRTLSALAACSLRHCRYIIHKC) directs the protein to the mitochondrion.

It belongs to the class-II aminoacyl-tRNA synthetase family.

Its subcellular location is the mitochondrion matrix. It carries out the reaction tRNA(Pro) + L-proline + ATP = L-prolyl-tRNA(Pro) + AMP + diphosphate. In terms of biological role, mitochondrial aminoacyl-tRNA synthetase that catalyzes the specific attachment of the proline amino acid (aa) to the homologous transfer RNA (tRNA), further participating in protein synthesis. The reaction occurs in a two steps: proline is first activated by ATP to form Pro-AMP and then transferred to the acceptor end of tRNA(Pro). This is Probable proline--tRNA ligase, mitochondrial (Pars2) from Mus musculus (Mouse).